A 539-amino-acid polypeptide reads, in one-letter code: Beta-apo-4'-carotenal oxygenase (539 aa).

Catalysis depends on residues Glu-228 and Cys-262.

This sequence belongs to the aldehyde dehydrogenase family.

It catalyses the reaction 4'-apo-beta-carotenal + NAD(+) + H2O = neurosporaxanthin + NADH + 2 H(+). Functionally, beta-apo-4'-carotenal oxygenase involved in the last step of synthesis of neurosporaxanthin, a carboxylic apocarotenoid acting as an essential protective pigments and leading to orange pigmentation. Converts the aldehyde beta-apo-4'-carotenal into neurosporaxanthin. Is also able to use shorter apocarotenals as substrates (such as beta-apo-8'-carotenal (C30), beta-apo-10'-carotenal (C27), or the acyclic apocarotenal apo-8'-lycopenal (C30)), indicating wide substrate specificity. Neurosporaxanthin is synthesized from geranyl-geranyl pyrophosphate (GGPP) through several enzymatic activities. Phytoene synthase activity performed by the bifunctional enzyme carAR first produces phytoene from geranyl-geranyl pyrophosphate (GGPP). The phytoene dehydrogenase carB then introduces 4 desaturations to lead to lycopene which is substrate of the carotene cyclase activity of carAR that leads to the production of gamma-carotene. CarB then performs a 5th desaturation reaction to yield torulene. Torulene is the substrate of the dioxidase carT that breaks the molecule, removing five carbon atoms to yield beta-apo-4'-carotenal, whereas the aldehyde dehydrogenase carD mediates the last step by converting beta-apo-4'-carotenal into neurosporaxanthin. This chain is Beta-apo-4'-carotenal oxygenase, found in Gibberella fujikuroi (strain CBS 195.34 / IMI 58289 / NRRL A-6831) (Bakanae and foot rot disease fungus).